Reading from the N-terminus, the 165-residue chain is Type II secretion system protein M (165 aa).

The Cytoplasmic portion of the chain corresponds to Met-1 to Met-22. The helical transmembrane segment at Val-23–Leu-43 threads the bilayer. The Periplasmic segment spans residues Ser-44 to Gly-165.

It belongs to the GSP M family. In terms of assembly, type II secretion system is composed of four main components: the outer membrane complex, the inner membrane complex, the cytoplasmic secretion ATPase and the periplasm-spanning pseudopilus. Forms homodimers. Interacts with EpsL/GspL. Interacts with EpsE/GspE. Interacts with EpsF/GspF.

It localises to the cell inner membrane. In terms of biological role, inner membrane component of the type II secretion system required for the energy-dependent secretion of extracellular factors such as proteases and toxins from the periplasm. Plays a role in the complex assembly and recruits EpsL resulting in a stable complex in the inner membrane. Provides thus a link between the energy-providing EpsE protein in the cytoplasm and the rest of the T2SS machinery. This Vibrio cholerae serotype O1 (strain ATCC 39315 / El Tor Inaba N16961) protein is Type II secretion system protein M (epsM).